The chain runs to 270 residues: 2-aminoethanethiol dioxygenase (270 aa).

Positions 21-48 are disordered; the sequence is FRGSGGGRGASDRDAASGPEAPMQPGFP. Fe cation contacts are provided by His112 and His114. Residues 140-164 form a disordered region; that stretch reads GGQRPRALPPEQQFEPPLQPREREA. His193 is a Fe cation binding site. The segment at residues 220–223 is a cross-link (3'-(S-cysteinyl)-tyrosine (Cys-Tyr)); it reads CHYY.

As to quaternary structure, monomer. Fe cation is required as a cofactor.

The enzyme catalyses cysteamine + O2 = hypotaurine + H(+). It catalyses the reaction N-terminal L-cysteinyl-[protein] + O2 = N-terminal S-hydroxy-S-oxy-L-cysteinyl-[protein] + H(+). In terms of biological role, plays a vital role in regulating thiol metabolism and preserving oxygen homeostasis by oxidizing the sulfur of cysteamine and N-terminal cysteine-containing proteins to their corresponding sulfinic acids using O2 as a cosubstrate. Catalyzes the oxidation of cysteamine (2-aminoethanethiol) to hypotaurine. Catalyzes the oxidation of regulators of G-protein signaling 4 (RGS4) and 5 (RGS5) and interleukin-32 (IL32). This chain is 2-aminoethanethiol dioxygenase (ADO), found in Homo sapiens (Human).